A 259-amino-acid polypeptide reads, in one-letter code: Large ribosomal subunit protein uL2m (259 aa).

Residues 234 to 259 (VAMNPVDHPNGGRTKTPKPERSPGVE) are disordered. Over residues 250 to 259 (PKPERSPGVE) the composition is skewed to basic and acidic residues.

Belongs to the universal ribosomal protein uL2 family.

The protein resides in the mitochondrion. This Paramecium tetraurelia protein is Large ribosomal subunit protein uL2m (RPL2).